A 364-amino-acid chain; its full sequence is Cell cycle control protein 50A (364 aa).

Residues 1-28 (MAMNYSAKDEVDGGPAGPPGGAAKTRRP) form a disordered region. At Ala2 the chain carries N-acetylalanine. Over 2–49 (AMNYSAKDEVDGGPAGPPGGAAKTRRPDNTAFKQQRLPAWQPILTAGT) the chain is Cytoplasmic. Residues 50–70 (VLPTFFIIGLIFIPIGIGIFV) form a helical membrane-spanning segment. The Exoplasmic loop segment spans residues 71–328 (TSNNIREIEI…SWMGGKNPFL (258 aa)). Disulfide bonds link Cys91–Cys104, Cys94–Cys102, and Cys157–Cys171. Asn98 is a glycosylation site (N-linked (GlcNAc...) asparagine). Asn297 carries an N-linked (GlcNAc...) asparagine glycan. The chain crosses the membrane as a helical span at residues 329 to 349 (GIAYITIGSISFLLGVVLLVI). At 350–364 (NHKYRNSSNTADITI) the chain is on the cytoplasmic side.

The protein belongs to the CDC50/LEM3 family. As to quaternary structure, component of various P4-ATPase flippase complexes which consists of a catalytic alpha subunit and an accessory beta subunit. Interacts with ATP8A1 to form a flippase complex; this complex forms an intermediate phosphoenzyme. The ATP8A2:TMEM30A flippase complex has been purified, and ATP8B1:TMEM30A and ATP8B2:TMEM30A flippase complexes have been shown to form intermediate phosphoenzymes in vitro. Interacts with alpha subunits ATP8A1, ATP8B1, ATP8B2, ATP8B4, ATP10A, ATP10B, ATP10D, ATP11A, ATP11B and ATP11C. In terms of processing, N-glycosylated. Contains high mannose-type oligosaccharides. In terms of tissue distribution, expressed in photoreceptor cells; detected in retina outer segment (at protein level). Detected in hepatocytes liver sinusoidal endothelial cells and kidney brush border of the proximal tubules (at protein level). Expressed in brain (at protein level).

The protein resides in the membrane. It is found in the cell membrane. Its subcellular location is the golgi apparatus. It localises to the cytoplasmic vesicle. The protein localises to the secretory vesicle membrane. The protein resides in the apical cell membrane. In terms of biological role, accessory component of a P4-ATPase flippase complex which catalyzes the hydrolysis of ATP coupled to the transport of aminophospholipids from the outer to the inner leaflet of various membranes and ensures the maintenance of asymmetric distribution of phospholipids. Phospholipid translocation also seems to be implicated in vesicle formation and in uptake of lipid signaling molecules. The beta subunit may assist in binding of the phospholipid substrate. Required for the proper folding, assembly and ER to Golgi exit of the ATP8A2:TMEM30A flippase complex. ATP8A2:TMEM30A may be involved in regulation of neurite outgrowth, and, reconstituted to liposomes, predomiminantly transports phosphatidylserine (PS) and to a lesser extent phosphatidylethanolamine (PE). The ATP8A1:TMEM30A flippase complex seems to play a role in regulation of cell migration probably involving flippase-mediated translocation of phosphatidylethanolamine (PE) at the plasma membrane. Required for the formation of the ATP8A2, ATP8B1 and ATP8B2 P-type ATPAse intermediate phosphoenzymes. Involved in uptake of platelet-activating factor (PAF). Can also mediate the export of alpha subunits ATP8A1, ATP8B1, ATP8B2, ATP8B4, ATP10A, ATP10B, ATP10D, ATP11A, ATP11B and ATP11C from the ER to other membrane localizations. This is Cell cycle control protein 50A from Mus musculus (Mouse).